Consider the following 314-residue polypeptide: Malate dehydrogenase (314 aa).

Residues 12 to 17 and D36 each bind NAD(+); that span reads GAGNIG. 2 residues coordinate substrate: R85 and R91. NAD(+) is bound by residues N98 and 121 to 123; that span reads VTN. Substrate-binding residues include N123 and R154. The active-site Proton acceptor is the H178.

The protein belongs to the LDH/MDH superfamily. MDH type 3 family.

It catalyses the reaction (S)-malate + NAD(+) = oxaloacetate + NADH + H(+). Catalyzes the reversible oxidation of malate to oxaloacetate. The polypeptide is Malate dehydrogenase (Wolbachia pipientis subsp. Culex pipiens (strain wPip)).